Here is a 217-residue protein sequence, read N- to C-terminus: Tectonin-1 (217 aa).

Repeat copies occupy residues 2–37 (VHWE…HWDG), 38–74 (HKWH…DRSN), 75–111 (NKWT…DHHH), 112–146 (NKWD…RWDG), 147–182 (SKVD…LKHG), and 183–217 (KDWE…KATL). The interval 2–217 (VHWEKHEGEL…KLHHIYKATL (216 aa)) is 6 X approximate tandem repeats.

It belongs to the tectonin family.

Its subcellular location is the cell surface. The protein resides in the cytoplasmic vesicle membrane. Probably involved in bacterial recognition. May be a lectin that function as part of a transmembrane signaling complex during phagocytosis. This is Tectonin-1 (TECA) from Physarum polycephalum (Slime mold).